The chain runs to 449 residues: Glutamyl-tRNA reductase (449 aa).

Substrate is bound by residues 58 to 61 (TCNR), serine 121, 126 to 128 (ETQ), and glutamine 132. Cysteine 59 (nucleophile) is an active-site residue. 203-208 (GLGEMA) is an NADP(+) binding site.

The protein belongs to the glutamyl-tRNA reductase family. As to quaternary structure, homodimer.

It catalyses the reaction (S)-4-amino-5-oxopentanoate + tRNA(Glu) + NADP(+) = L-glutamyl-tRNA(Glu) + NADPH + H(+). The protein operates within porphyrin-containing compound metabolism; protoporphyrin-IX biosynthesis; 5-aminolevulinate from L-glutamyl-tRNA(Glu): step 1/2. Functionally, catalyzes the NADPH-dependent reduction of glutamyl-tRNA(Glu) to glutamate 1-semialdehyde (GSA). The sequence is that of Glutamyl-tRNA reductase from Helicobacter pylori (strain P12).